A 105-amino-acid polypeptide reads, in one-letter code: Small ribosomal subunit protein uS10 (105 aa).

This sequence belongs to the universal ribosomal protein uS10 family. As to quaternary structure, part of the 30S ribosomal subunit.

Functionally, involved in the binding of tRNA to the ribosomes. In Rickettsia rickettsii (strain Iowa), this protein is Small ribosomal subunit protein uS10.